A 307-amino-acid chain; its full sequence is Tyrosine recombinase XerC (307 aa).

The Core-binding (CB) domain maps to 6–89 (HNTLQTVNTF…TLRTFFRYLM (84 aa)). In terms of domain architecture, Tyr recombinase spans 110–293 (RLPKALDVDQ…DFQHLAQVYD (184 aa)). Catalysis depends on residues R151, K175, H245, R248, and H271. Catalysis depends on Y280, which acts as the O-(3'-phospho-DNA)-tyrosine intermediate.

Belongs to the 'phage' integrase family. XerC subfamily. Forms a cyclic heterotetrameric complex composed of two molecules of XerC and two molecules of XerD.

It is found in the cytoplasm. Its function is as follows. Site-specific tyrosine recombinase, which acts by catalyzing the cutting and rejoining of the recombining DNA molecules. The XerC-XerD complex is essential to convert dimers of the bacterial chromosome into monomers to permit their segregation at cell division. It also contributes to the segregational stability of plasmids. In Alcanivorax borkumensis (strain ATCC 700651 / DSM 11573 / NCIMB 13689 / SK2), this protein is Tyrosine recombinase XerC.